Here is a 506-residue protein sequence, read N- to C-terminus: ATP synthase subunit alpha (506 aa).

Residue 170–177 (GDRQTGKT) participates in ATP binding.

The protein belongs to the ATPase alpha/beta chains family. In terms of assembly, F-type ATPases have 2 components, CF(1) - the catalytic core - and CF(0) - the membrane proton channel. CF(1) has five subunits: alpha(3), beta(3), gamma(1), delta(1), epsilon(1). CF(0) has four main subunits: a(1), b(1), b'(1) and c(9-12).

The protein localises to the cellular thylakoid membrane. It carries out the reaction ATP + H2O + 4 H(+)(in) = ADP + phosphate + 5 H(+)(out). Its function is as follows. Produces ATP from ADP in the presence of a proton gradient across the membrane. The alpha chain is a regulatory subunit. This chain is ATP synthase subunit alpha, found in Synechococcus sp. (strain CC9902).